A 938-amino-acid chain; its full sequence is Microperfuranone synthase (938 aa).

The tract at residues 44–445 (TSTRISYAEL…AGRTKDTIIV (402 aa)) is adenylation (A) domain. Residues 579–655 (SDSERAVQKA…AIARSIDSSR (77 aa)) form the Carrier domain. The interval 581–652 (SERAVQKALV…TPGAIARSID (72 aa)) is thiolation and peptide carrier (T) domain. Ser613 carries the post-translational modification O-(pantetheine 4'-phosphoryl)serine. Positions 676–923 (PLFCIHPGSG…AKMLNREHIA (248 aa)) are thioesterase (TE) domain. Ser746 is an active-site residue.

The protein belongs to the ATP-dependent AMP-binding enzyme family.

It participates in secondary metabolite biosynthesis. In terms of biological role, microperfuranone synthase is the only protein required for the biosynthesis of the secondary metabolite microperfuranone from phenylpyruvic acid (PPA). Several steps for the microperfuranione biosynthesis have been proposed. These steps include the activation of PPA, by the micA adenylation (A) domain to AMP-phenylpyruvic acid followed by loading of the PPA unit to the thiolation and peptide carrier (T) domain and eventually transferring to the thioesterase (TE) domain. After loading another PPA unit onto the T domain, aldol condensation establishes the carbon-carbon bond between the alpha- and beta-carbon of the two PPA units. Sulfur-assisted furan ring formation, TE domain mediated hydrolysis, decarboxylation, and keto-enol tautomerization would generate microperfuranone attached to the T domain. Finally, microperfuranone is released by the TE domain. This Emericella nidulans (strain FGSC A4 / ATCC 38163 / CBS 112.46 / NRRL 194 / M139) (Aspergillus nidulans) protein is Microperfuranone synthase.